The primary structure comprises 120 residues: Large ribosomal subunit protein uL18 (120 aa).

The protein belongs to the universal ribosomal protein uL18 family. As to quaternary structure, part of the 50S ribosomal subunit; part of the 5S rRNA/L5/L18/L25 subcomplex. Contacts the 5S and 23S rRNAs.

Its function is as follows. This is one of the proteins that bind and probably mediate the attachment of the 5S RNA into the large ribosomal subunit, where it forms part of the central protuberance. This Brucella suis biovar 1 (strain 1330) protein is Large ribosomal subunit protein uL18.